A 259-amino-acid chain; its full sequence is Transcription factor bHLH80 (259 aa).

A disordered region spans residues 1–25; the sequence is MQSTHISGGSSGGGGGGGGEVSRSG. Gly residues predominate over residues 9-20; sequence GSSGGGGGGGGE. The region spanning 187–237 is the bHLH domain; sequence CATHPRSIAERVRRTRISDRIRRLQELVPNMDKQTNTADMLEEAVEYVKAL.

Homodimer. In terms of tissue distribution, expressed constitutively in roots, leaves, stems, and flowers.

The protein localises to the nucleus. The polypeptide is Transcription factor bHLH80 (BHLH80) (Arabidopsis thaliana (Mouse-ear cress)).